The following is a 176-amino-acid chain: Avian agnoprotein 1a (176 aa).

2 disordered regions span residues 1–85 (MSTP…GKLE) and 116–176 (VYAA…RPAR). Basic and acidic residues predominate over residues 75 to 85 (YDRQNRFGKLE). Residues 76 to 119 (DRQNRFGKLESEIRETKSQLETLRQELKHLQADVDDLKETVYAA) are a coiled coil. Positions 137–161 (TPTATTPEASPAAPTTESTETTGPS) are enriched in low complexity.

As to quaternary structure, interacts with VP1.

The protein resides in the virion. The protein localises to the host nucleus. The polypeptide is Avian agnoprotein 1a (Budgerigar fledgling disease virus (BFPyV)).